Consider the following 213-residue polypeptide: 3-isopropylmalate dehydratase small subunit (213 aa).

The protein belongs to the LeuD family. LeuD type 1 subfamily. In terms of assembly, heterodimer of LeuC and LeuD.

It carries out the reaction (2R,3S)-3-isopropylmalate = (2S)-2-isopropylmalate. It participates in amino-acid biosynthesis; L-leucine biosynthesis; L-leucine from 3-methyl-2-oxobutanoate: step 2/4. Catalyzes the isomerization between 2-isopropylmalate and 3-isopropylmalate, via the formation of 2-isopropylmaleate. The protein is 3-isopropylmalate dehydratase small subunit of Pseudomonas syringae pv. syringae (strain B728a).